Here is an 89-residue protein sequence, read N- to C-terminus: Small ribosomal subunit protein uS15 (89 aa).

The protein belongs to the universal ribosomal protein uS15 family. Part of the 30S ribosomal subunit. Forms a bridge to the 50S subunit in the 70S ribosome, contacting the 23S rRNA.

In terms of biological role, one of the primary rRNA binding proteins, it binds directly to 16S rRNA where it helps nucleate assembly of the platform of the 30S subunit by binding and bridging several RNA helices of the 16S rRNA. Forms an intersubunit bridge (bridge B4) with the 23S rRNA of the 50S subunit in the ribosome. The protein is Small ribosomal subunit protein uS15 of Aeromonas hydrophila subsp. hydrophila (strain ATCC 7966 / DSM 30187 / BCRC 13018 / CCUG 14551 / JCM 1027 / KCTC 2358 / NCIMB 9240 / NCTC 8049).